The primary structure comprises 273 residues: Large ribosomal subunit protein uL2cz/uL2cy (273 aa).

Disordered stretches follow at residues 1-27 and 225-273; these read MAKH…SNPR and PVDH…RRRK.

It belongs to the universal ribosomal protein uL2 family. Part of the 50S ribosomal subunit.

Its subcellular location is the plastid. It is found in the chloroplast. In Lolium perenne (Perennial ryegrass), this protein is Large ribosomal subunit protein uL2cz/uL2cy (rpl2-A).